The following is a 302-amino-acid chain: Nucleotide-binding protein Bamb_2855 (302 aa).

8 to 15 contributes to the ATP binding site; that stretch reads GISGSGKS. 57 to 60 is a GTP binding site; sequence DARS.

The protein belongs to the RapZ-like family.

Its function is as follows. Displays ATPase and GTPase activities. This is Nucleotide-binding protein Bamb_2855 from Burkholderia ambifaria (strain ATCC BAA-244 / DSM 16087 / CCUG 44356 / LMG 19182 / AMMD) (Burkholderia cepacia (strain AMMD)).